Consider the following 120-residue polypeptide: NAD(P)H-quinone oxidoreductase subunit 3, chloroplastic (120 aa).

Helical transmembrane passes span 9-29 (IFWA…LISG), 64-84 (MFAL…PWAM), and 88-108 (VLGV…IVGL).

This sequence belongs to the complex I subunit 3 family. NDH is composed of at least 16 different subunits, 5 of which are encoded in the nucleus.

It is found in the plastid. It localises to the chloroplast thylakoid membrane. It catalyses the reaction a plastoquinone + NADH + (n+1) H(+)(in) = a plastoquinol + NAD(+) + n H(+)(out). It carries out the reaction a plastoquinone + NADPH + (n+1) H(+)(in) = a plastoquinol + NADP(+) + n H(+)(out). In terms of biological role, NDH shuttles electrons from NAD(P)H:plastoquinone, via FMN and iron-sulfur (Fe-S) centers, to quinones in the photosynthetic chain and possibly in a chloroplast respiratory chain. The immediate electron acceptor for the enzyme in this species is believed to be plastoquinone. Couples the redox reaction to proton translocation, and thus conserves the redox energy in a proton gradient. The sequence is that of NAD(P)H-quinone oxidoreductase subunit 3, chloroplastic from Lupinus luteus (European yellow lupine).